Consider the following 459-residue polypeptide: Alcohol acyl transferase 1 allele RGc (459 aa).

Catalysis depends on proton acceptor residues H164 and N385.

The protein belongs to the plant acyltransferase family. Expressed at very low levels in the skin of ripe fruit.

In terms of biological role, involved in the biosynthesis of volatile esters which confer ripe apple fruit flavor. Alcohol acyl transferase that can use a wide range of alcohols as substrate to produce esters. In Malus domestica (Apple), this protein is Alcohol acyl transferase 1 allele RGc.